The chain runs to 164 residues: N5-carboxyaminoimidazole ribonucleotide mutase (164 aa).

3 residues coordinate substrate: Ser-13, Asp-16, and Arg-43.

It belongs to the AIR carboxylase family. Class I subfamily.

The catalysed reaction is 5-carboxyamino-1-(5-phospho-D-ribosyl)imidazole + H(+) = 5-amino-1-(5-phospho-D-ribosyl)imidazole-4-carboxylate. The protein operates within purine metabolism; IMP biosynthesis via de novo pathway; 5-amino-1-(5-phospho-D-ribosyl)imidazole-4-carboxylate from 5-amino-1-(5-phospho-D-ribosyl)imidazole (N5-CAIR route): step 2/2. Its function is as follows. Catalyzes the conversion of N5-carboxyaminoimidazole ribonucleotide (N5-CAIR) to 4-carboxy-5-aminoimidazole ribonucleotide (CAIR). This chain is N5-carboxyaminoimidazole ribonucleotide mutase, found in Haemophilus influenzae (strain ATCC 51907 / DSM 11121 / KW20 / Rd).